The chain runs to 471 residues: GTPase Der (471 aa).

2 EngA-type G domains span residues 5-168 (PVIA…TDLE) and 186-359 (IRVA…DSAF). GTP is bound by residues 11–18 (GRPNVGKS), 58–62 (DTGGI), 120–123 (NKTD), 192–199 (GRPNVGKS), 239–243 (DTAGV), and 304–307 (NKWD). The region spanning 360–444 (IKIGTNELTR…PIRLEFKSGT (85 aa)) is the KH-like domain.

Belongs to the TRAFAC class TrmE-Era-EngA-EngB-Septin-like GTPase superfamily. EngA (Der) GTPase family. In terms of assembly, associates with the 50S ribosomal subunit.

Its function is as follows. GTPase that plays an essential role in the late steps of ribosome biogenesis. The sequence is that of GTPase Der from Alcanivorax borkumensis (strain ATCC 700651 / DSM 11573 / NCIMB 13689 / SK2).